The chain runs to 279 residues: MAIEFTKYHGLGNDFILIDNRSSSLPVLTPEQAIQLCDRHFGIGADGVIFALPGENGTDYTMRIFNSDGSEPEMCGNGIRCLAGFLADLEGQSRNKDSYRIHTLGGVMTPQLLSDGLVKVDMGLPRLLAGEIPTTLAPVEEKVISVPLEVAGKTWEVTCVNMGNPHCITFVEDVAAIELESIGPKFEHHPAFPQRINTEFIQVVRRDYLKMRVWERGAGITLACGTGACASLVAGVLTGKCDRTATVELPGGPLQIEWSEIDQRVYMTGPAERVFTGKL.

Substrate is bound by residues Asn-13 and Asn-66. Cys-75 acts as the Proton donor in catalysis. Substrate-binding positions include 76–77, Asn-164, Asn-197, and 215–216; these read GN and ER. The active-site Proton acceptor is the Cys-224. 225 to 226 lines the substrate pocket; sequence GT.

Belongs to the diaminopimelate epimerase family. Homodimer.

It is found in the cytoplasm. The catalysed reaction is (2S,6S)-2,6-diaminopimelate = meso-2,6-diaminopimelate. It participates in amino-acid biosynthesis; L-lysine biosynthesis via DAP pathway; DL-2,6-diaminopimelate from LL-2,6-diaminopimelate: step 1/1. Functionally, catalyzes the stereoinversion of LL-2,6-diaminopimelate (L,L-DAP) to meso-diaminopimelate (meso-DAP), a precursor of L-lysine and an essential component of the bacterial peptidoglycan. This Nostoc punctiforme (strain ATCC 29133 / PCC 73102) protein is Diaminopimelate epimerase.